Consider the following 444-residue polypeptide: Cytokine receptor-like factor 3 (444 aa).

A coiled-coil region spans residues 1-65; the sequence is MSIEAEALLQ…QELQTAVSRL (65 aa). The 94-residue stretch at 177 to 270 folds into the Fibronectin type-III domain; it reads PPVQIEELVE…PQTGYTTLAP (94 aa).

Belongs to the cytokine receptor-like factor 3 family.

It is found in the cytoplasm. Its function is as follows. May play a role in the negative regulation of cell cycle progression. This is Cytokine receptor-like factor 3 (crlf3) from Danio rerio (Zebrafish).